Reading from the N-terminus, the 274-residue chain is NH(3)-dependent NAD(+) synthetase (274 aa).

46 to 53 is an ATP binding site; that stretch reads GISGGQDS. D52 is a binding site for Mg(2+). R140 serves as a coordination point for deamido-NAD(+). T160 serves as a coordination point for ATP. A Mg(2+)-binding site is contributed by E165. Positions 173 and 180 each coordinate deamido-NAD(+). ATP contacts are provided by K189 and T211. 260–261 provides a ligand contact to deamido-NAD(+); it reads HK.

The protein belongs to the NAD synthetase family. As to quaternary structure, homodimer.

It carries out the reaction deamido-NAD(+) + NH4(+) + ATP = AMP + diphosphate + NAD(+) + H(+). It functions in the pathway cofactor biosynthesis; NAD(+) biosynthesis; NAD(+) from deamido-NAD(+) (ammonia route): step 1/1. Catalyzes the ATP-dependent amidation of deamido-NAD to form NAD. Uses ammonia as a nitrogen source. The sequence is that of NH(3)-dependent NAD(+) synthetase from Streptococcus equi subsp. zooepidemicus (strain MGCS10565).